The sequence spans 93 residues: uncharacterized protein (93 aa).

The chain crosses the membrane as a helical span at residues 68-88; it reads WLVTVVLANGVVSLFLLGGLI.

It localises to the membrane. This is an uncharacterized protein from Mycoplasma pneumoniae (strain ATCC 29342 / M129 / Subtype 1) (Mycoplasmoides pneumoniae).